The chain runs to 399 residues: Subtilisin-like protease 4 (399 aa).

A signal peptide spans 1–19; sequence MVCLKTLSVFLAAFAAADA. The propeptide occupies 20–118; sequence RAVFKTQGHK…VEQDQVVRIS (99 aa). Residues 38 to 117 form the Inhibitor I9 domain; it reads YIVVMKDGVS…YVEQDQVVRI (80 aa). The Peptidase S8 domain occupies 128–399; sequence SWGLGRVSHR…NRLLYNGSGQ (272 aa). Residues D160 and H191 each act as charge relay system in the active site. 2 N-linked (GlcNAc...) asparagine glycosylation sites follow: N252 and N308. The active-site Charge relay system is the S346. N-linked (GlcNAc...) asparagine glycosylation is present at N395.

It belongs to the peptidase S8 family.

It is found in the secreted. Secreted subtilisin-like serine protease with keratinolytic activity that contributes to pathogenicity. This chain is Subtilisin-like protease 4 (SUB4), found in Arthroderma benhamiae (strain ATCC MYA-4681 / CBS 112371) (Trichophyton mentagrophytes).